The sequence spans 431 residues: 5-methylthioadenosine/S-adenosylhomocysteine deaminase (431 aa).

The Zn(2+) site is built by His-60 and His-62. 2 residues coordinate substrate: Glu-89 and His-182. His-209 is a binding site for Zn(2+). Substrate is bound by residues Glu-212 and Asp-297. Asp-297 contributes to the Zn(2+) binding site.

This sequence belongs to the metallo-dependent hydrolases superfamily. MTA/SAH deaminase family. Zn(2+) serves as cofactor.

It carries out the reaction S-adenosyl-L-homocysteine + H2O + H(+) = S-inosyl-L-homocysteine + NH4(+). The enzyme catalyses S-methyl-5'-thioadenosine + H2O + H(+) = S-methyl-5'-thioinosine + NH4(+). Functionally, catalyzes the deamination of 5-methylthioadenosine and S-adenosyl-L-homocysteine into 5-methylthioinosine and S-inosyl-L-homocysteine, respectively. Is also able to deaminate adenosine. The protein is 5-methylthioadenosine/S-adenosylhomocysteine deaminase of Natronomonas pharaonis (strain ATCC 35678 / DSM 2160 / CIP 103997 / JCM 8858 / NBRC 14720 / NCIMB 2260 / Gabara) (Halobacterium pharaonis).